The sequence spans 156 residues: MAVKIRLKRFGKIRAPFYRVVVMDSRTRRDGRAIEEIGKYHPTEEPSFIEIDSERAQYWLSVGAQPTEQVAALLKITGDWQKFKGESGAEGTLKSKSEKEAFVAPERDSVILPEEPKQEEAPAESEQPAEAPAEEAAEAPAEEAAEAPAEDAEKSE.

Over residues 85 to 120 the composition is skewed to basic and acidic residues; that stretch reads GESGAEGTLKSKSEKEAFVAPERDSVILPEEPKQEE. A disordered region spans residues 85 to 156; the sequence is GESGAEGTLK…APAEDAEKSE (72 aa). Over residues 132-150 the composition is skewed to acidic residues; that stretch reads PAEEAAEAPAEEAAEAPAE.

Belongs to the bacterial ribosomal protein bS16 family.

The sequence is that of Small ribosomal subunit protein bS16 from Micrococcus luteus (strain ATCC 4698 / DSM 20030 / JCM 1464 / CCM 169 / CCUG 5858 / IAM 1056 / NBRC 3333 / NCIMB 9278 / NCTC 2665 / VKM Ac-2230) (Micrococcus lysodeikticus).